Here is a 711-residue protein sequence, read N- to C-terminus: Nucleolin (711 aa).

The interval methionine 1 to proline 304 is disordered. An N6-acetyllysine mark is found at lysine 9, lysine 15, and lysine 16. The span at valine 24 to glycine 43 shows a compositional bias: acidic residues. Phosphoserine occurs at positions 28, 34, 41, and 42. Residues alanine 56–proline 107 are compositionally biased toward low complexity. Copy 1 of the repeat occupies alanine 58 to valine 65. Residues alanine 58–lysine 135 are 8 X 8 AA tandem repeats of X-T-P-X-K-K-X-X. The residue at position 67 (serine 67) is a Phosphoserine. Residues threonine 69, threonine 76, threonine 84, and threonine 92 each carry the phosphothreonine modification. Tandem repeats lie at residues alanine 75–alanine 82, valine 83–alanine 90, and alanine 91–valine 98. At lysine 96 the chain carries N6-acetyllysine. Threonine 99 bears the Phosphothreonine mark. One copy of the 5; truncated repeat lies at threonine 99–valine 104. Lysine 102 carries the N6-acetyllysine modification. Repeat 6 spans residues alanine 105–alanine 112. A Phosphothreonine modification is found at threonine 106. Lysine 109 carries the N6-acetyllysine modification. Threonine 113 carries the phosphothreonine modification. Lysine 116 carries the post-translational modification N6-acetyllysine. 2 consecutive repeat copies span residues alanine 120–alanine 127 and alanine 128–lysine 135. Position 121 is a phosphothreonine (threonine 121). The span at proline 122–glycine 137 shows a compositional bias: low complexity. Lysine 124 is modified (N6-acetyllysine). Residues serine 145, serine 153, serine 184, and serine 207 each carry the phosphoserine modification. Composition is skewed to acidic residues over residues serine 145–glutamate 171 and serine 184–methionine 212. Threonine 215 carries the phosphothreonine modification. Acidic residues predominate over residues glutamate 235–proline 273. Positions valine 274–glycine 301 are enriched in basic and acidic residues. Lysine 298 is covalently cross-linked (Glycyl lysine isopeptide (Lys-Gly) (interchain with G-Cter in SUMO1); alternate). Residue lysine 298 forms a Glycyl lysine isopeptide (Lys-Gly) (interchain with G-Cter in SUMO2); alternate linkage. At threonine 302 the chain carries Phosphothreonine. RRM domains follow at residues phenylalanine 308–glycine 384 and arginine 394–glutamate 467. Lysine 319 is modified (N6-acetyllysine). Lysine 325 is covalently cross-linked (Glycyl lysine isopeptide (Lys-Gly) (interchain with G-Cter in SUMO1); alternate). A Glycyl lysine isopeptide (Lys-Gly) (interchain with G-Cter in SUMO2); alternate cross-link involves residue lysine 325. At lysine 349 the chain carries N6-acetyllysine. Residue serine 357 is modified to Phosphoserine. Phosphothreonine is present on threonine 368. Residue lysine 371 forms a Glycyl lysine isopeptide (Lys-Gly) (interchain with G-Cter in SUMO2) linkage. Residue lysine 378 forms a Glycyl lysine isopeptide (Lys-Gly) (interchain with G-Cter in SUMO2); alternate linkage. At lysine 378 the chain carries N6-acetyllysine; alternate. N6-acetyllysine is present on residues lysine 399 and lysine 404. Threonine 406 is modified (phosphothreonine). N6-acetyllysine occurs at positions 428 and 445. Serine 459 and serine 461 each carry phosphoserine. 2 positions are modified to N6-acetyllysine: lysine 468 and lysine 478. One can recognise an RRM 3 domain in the interval lysine 487–proline 561. Lysine 514 participates in a covalent cross-link: Glycyl lysine isopeptide (Lys-Gly) (interchain with G-Cter in SUMO2); alternate. Lysine 514 carries the N6-acetyllysine; alternate modification. Lysine 522 is subject to N6-acetyllysine. Serine 564 bears the Phosphoserine mark. Lysine 573 is subject to N6-acetyllysine. In terms of domain architecture, RRM 4 spans lysine 573–proline 648. Lysine 578 participates in a covalent cross-link: Glycyl lysine isopeptide (Lys-Gly) (interchain with G-Cter in SUMO2); alternate. Lysine 578 is modified (N6-acetyllysine; alternate). Residue serine 581 is modified to Phosphoserine. Lysine 590 participates in a covalent cross-link: Glycyl lysine isopeptide (Lys-Gly) (interchain with G-Cter in SUMO1); alternate. Lysine 590 is covalently cross-linked (Glycyl lysine isopeptide (Lys-Gly) (interchain with G-Cter in SUMO2); alternate). Serine 592 and serine 620 each carry phosphoserine. Residue lysine 625 forms a Glycyl lysine isopeptide (Lys-Gly) (interchain with G-Cter in SUMO2) linkage. Residues valine 641–glutamate 711 are disordered. An N6-acetyllysine modification is found at lysine 647. The span at glutamate 651–glycine 697 shows a compositional bias: gly residues. An asymmetric dimethylarginine mark is found at arginine 657, arginine 661, arginine 667, arginine 671, arginine 674, arginine 680, arginine 682, arginine 688, and arginine 692. Arginine 695 carries the post-translational modification Asymmetric dimethylarginine; alternate. Omega-N-methylarginine; alternate is present on arginine 695. Positions glycine 698–glutamate 711 are enriched in basic and acidic residues.

In terms of assembly, identified in a IGF2BP1-dependent mRNP granule complex containing untranslated mRNAs. Component of the SWAP complex that consists of NPM1, NCL/nucleolin, PARP1 and SWAP70. Component of a complex which is at least composed of HTATSF1/Tat-SF1, the P-TEFb complex components CDK9 and CCNT1, RNA polymerase II, SUPT5H, and NCL/nucleolin. Interacts with AICDA. Interacts with APTX. Interacts with C1QBP. Interacts with ERBB4. Interacts (via C-terminus) with FMR1 isoform 6 (via N-terminus). Interacts with GZF1; this interaction is important for nucleolar localization of GZF1. Interacts with NSUN2. Interacts with NVL. Interacts (via N-terminus domain) with SETX. Interacts (via RRM1 and C-terminal RRM4/Arg/Gly-rich domains) with TERT; the interaction is important for nucleolar localization of TERT. Interacts with WDR46. Interacts with ZFP36. Interacts with LRRC34. Interacts with RRP1B. Interacts with HNRNPU; this interaction occurs during mitosis. Interacts with RIOK1; RIOK1 recruits NCL to PRMT5 for symmetrically methylation. Interacts with ZBTB7B. Interacts with MDK; this interaction promotes NCL clustering and lateral movements of this complex into lipid rafts leading to MDK internalization. Interacts with HDGF. Interacts with ALKBH2. Interacts with IGFBP5; this interaction is necessary for IGFBP5 localization to the nucleus. Post-translationally, some glutamate residues are glycylated by TTLL8. This modification occurs exclusively on glutamate residues and results in a glycine chain on the gamma-carboxyl group. Symmetrically methylated by PRMT5.

It is found in the nucleus. It localises to the nucleolus. The protein localises to the cytoplasm. Its function is as follows. Nucleolin is the major nucleolar protein of growing eukaryotic cells. It is found associated with intranucleolar chromatin and pre-ribosomal particles. It induces chromatin decondensation by binding to histone H1. It is thought to play a role in pre-rRNA transcription and ribosome assembly. May play a role in the process of transcriptional elongation. Binds RNA oligonucleotides with 5'-UUAGGG-3' repeats more tightly than the telomeric single-stranded DNA 5'-TTAGGG-3' repeats. This Macaca fascicularis (Crab-eating macaque) protein is Nucleolin (NCL).